The sequence spans 490 residues: N-succinylglutamate 5-semialdehyde dehydrogenase (490 aa).

An NAD(+)-binding site is contributed by 223–228; it reads GSSRTG. Residues glutamate 246 and cysteine 280 contribute to the active site.

This sequence belongs to the aldehyde dehydrogenase family. AstD subfamily.

It carries out the reaction N-succinyl-L-glutamate 5-semialdehyde + NAD(+) + H2O = N-succinyl-L-glutamate + NADH + 2 H(+). Its pathway is amino-acid degradation; L-arginine degradation via AST pathway; L-glutamate and succinate from L-arginine: step 4/5. Its function is as follows. Catalyzes the NAD-dependent reduction of succinylglutamate semialdehyde into succinylglutamate. The sequence is that of N-succinylglutamate 5-semialdehyde dehydrogenase from Pseudoalteromonas atlantica (strain T6c / ATCC BAA-1087).